The primary structure comprises 337 residues: Neurogenic differentiation factor 6 (337 aa).

Residues 28–80 form a disordered region; the sequence is QKQIKKPESFPKQVVLRGKSIKRAPGEETEKEEEEEDREEEDENGLSRRRGLR. A compositionally biased stretch (acidic residues) spans 54–71; it reads EETEKEEEEEDREEEDEN. The Nuclear localization signal signature appears at 80-86; it reads RKKKTTK. In terms of domain architecture, bHLH spans 94 to 146; sequence FRRQEANARERNRMHGLNDALDNLRKVVPCYSKTQKLSKIETLRLAKNYIWAL.

In terms of assembly, efficient DNA binding requires dimerization with another bHLH protein. As to expression, specific to the nervous system of both embryos and adults. Highest levels in the cortical plate of the cerebrum.

The protein resides in the nucleus. Functionally, activates E box-dependent transcription in collaboration with TCF3/E47. May be a trans-acting factor involved in the development and maintenance of the mammalian nervous system. Transactivates the promoter of its own gene. The chain is Neurogenic differentiation factor 6 (Neurod6) from Mus musculus (Mouse).